A 179-amino-acid polypeptide reads, in one-letter code: Translation initiation factor IF-3 (179 aa).

This sequence belongs to the IF-3 family. Monomer.

The protein localises to the cytoplasm. Functionally, IF-3 binds to the 30S ribosomal subunit and shifts the equilibrium between 70S ribosomes and their 50S and 30S subunits in favor of the free subunits, thus enhancing the availability of 30S subunits on which protein synthesis initiation begins. This is Translation initiation factor IF-3 from Lactococcus lactis subsp. lactis (strain IL1403) (Streptococcus lactis).